The primary structure comprises 360 residues: Putative F-box protein At3g16210 (360 aa).

The 48-residue stretch at 1-48 folds into the F-box domain; the sequence is MSKFLPEELAIEILVRLSMKDLARFRCVCKTWRDLINDPGFTETYRDM.

This Arabidopsis thaliana (Mouse-ear cress) protein is Putative F-box protein At3g16210.